The primary structure comprises 88 residues: Protein A19 homolog (88 aa).

The interval 1–28 (MADSTAGAKKRKKRSTSATSTRKEPPTV) is disordered.

Belongs to the chordopoxvirinae A19 family.

The polypeptide is Protein A19 homolog (Fowlpox virus (strain NVSL) (FPV)).